The sequence spans 799 residues: Ribosome biogenesis protein BOP1 homolog (799 aa).

Residues 1–171 (MPRRVRAQKR…DDTSDEEHSL (171 aa)) form a disordered region. Residues 58-69 (SESDVTDDEQID) are compositionally biased toward acidic residues. A compositionally biased stretch (basic and acidic residues) spans 70–81 (EEARQADRDLLK). Over residues 93 to 121 (DPSDADNDDDDDEEEAASDDDDEEEDAEP) the composition is skewed to acidic residues. Positions 122 to 132 (SSDSSNEASDA) are enriched in low complexity. 7 WD repeats span residues 457 to 498 (GHKA…RVVT), 500 to 538 (DAEVNMVAWCPNAGVSIVAVAHGHTVSLICPRVATAAID), 584 to 626 (PHHA…TQHP), 629 to 669 (KRNR…KKLL), 670 to 709 (TGVRWLSSLAIHPAGDNLIIGSYDKRLCWFDMDLSIKPYK), 713 to 752 (YHKYALRQVCFHKKYPIFASCGDDGNVHVLHGMVYNDLGQ), and 769 to 799 (SDGMGVMDCTFHPSQPWLFSAGSDGSIKLHV).

Belongs to the WD repeat BOP1/ERB1 family.

The protein resides in the nucleus. The protein localises to the nucleolus. Its subcellular location is the nucleoplasm. In terms of biological role, required for maturation of ribosomal RNAs and formation of the large ribosomal subunit. In Monosiga brevicollis (Choanoflagellate), this protein is Ribosome biogenesis protein BOP1 homolog.